The following is a 239-amino-acid chain: Large ribosomal subunit protein uL2 (239 aa).

Residues 200–239 (VNHPHGGKEHHIGRPSTVSRRAPPGRKVGHIAARRTGRRK) form a disordered region. Positions 222–239 (PPGRKVGHIAARRTGRRK) are enriched in basic residues.

Belongs to the universal ribosomal protein uL2 family. In terms of assembly, part of the 50S ribosomal subunit. Forms a bridge to the 30S subunit in the 70S ribosome.

One of the primary rRNA binding proteins. Required for association of the 30S and 50S subunits to form the 70S ribosome, for tRNA binding and peptide bond formation. It has been suggested to have peptidyltransferase activity; this is somewhat controversial. Makes several contacts with the 16S rRNA in the 70S ribosome. The polypeptide is Large ribosomal subunit protein uL2 (Thermococcus onnurineus (strain NA1)).